Here is a 314-residue protein sequence, read N- to C-terminus: Deoxymugineic acid synthase 1-A (314 aa).

The tract at residues 1 to 21 (MGAGDKTAAGMPRIGMGTAVQ) is disordered. D44 is a binding site for NADP(+). Y49 (proton donor) is an active-site residue. H112 is a substrate binding site. NADP(+) contacts are provided by residues 158-159 (AN), Q180, 258-266 (FDEARMREN), and 273-281 (ELTEEEHRR).

This sequence belongs to the aldo/keto reductase family. As to expression, mostly expressed in root tissues, observed in mesocotyl and embryonic roots, seedling roots, crown and seedling leafes, mature bracts, anthers, pistil, caryopsis and embryos.

It catalyses the reaction 2'-deoxymugineate + NAD(+) = 3''-deamino-3''-oxonicotianamine + NADH + H(+). The enzyme catalyses 2'-deoxymugineate + NADP(+) = 3''-deamino-3''-oxonicotianamine + NADPH + H(+). It functions in the pathway siderophore biosynthesis. Its function is as follows. Catalyzes the reduction of a 3''-keto intermediate during the biosynthesis of 2'-deoxymugineic acid (DMA) from L-Met. Involved in the formation of phytosiderophores (MAs) belonging to the mugineic acid family and required to acquire iron. The protein is Deoxymugineic acid synthase 1-A of Triticum aestivum (Wheat).